Reading from the N-terminus, the 493-residue chain is MADSKPLRTLDGDPVAVEALLQDVFGIVVDEAILKGTSASEKVCEWKEPEELKQLLDLELQSQGESREQILERCRTVIHYSVKTGHPRFFNQLFSGLDPHALAGRIITESLNTSQYTYEIAPVFVLMEEEVLKKLRALVGWNSGDGVFCPGGSISNMYAMNLARFQRYPDCKQRGLRALPPLALFTSKECHYSITKGAAFLGLGTDSVRVVKADERGRMIPEDLERQIILAEAEGSVPFLVSATSGTTVLGAFDPLDAIADVCQRHGLWFHVDAAWGGSVLLSRTHRHLLDGIQRADSVAWNPHKLLAAGLQCSALLLRDTSNLLKRCHGSQASYLFQQDKFYDVALDTGDKVVQCGRRVDCLKLWLMWKAQGGQGLERRIDQAFALTRYLVEEIKKREGFELVMEPEFVNVCFWFVPPSLRGKKESPDYSQRLSQVAPVLKERMVKKGTMMIGYQPHGTRANFFRMVVANPILAQADIDFLLGELELLGQDL.

K305 is modified (N6-(pyridoxal phosphate)lysine).

The protein belongs to the group II decarboxylase family. Homodimer. The cofactor is pyridoxal 5'-phosphate. Expressed in kidney and liver not detected in lymphoid tissues and lung. Expressed in kidney, liver and brain. 7 and 4 times higher expression in kidney and liver than in brain, respectively. Low level of detection in skeletal muscle. Expressed in brain, olfactory bulb, liver, skeletal muscle and kidney with the highest expression in liver and lowest in skeletal muscle (at protein level).

The enzyme catalyses L-aspartate + H(+) = beta-alanine + CO2. It catalyses the reaction 3-sulfino-L-alanine + H(+) = hypotaurine + CO2. The catalysed reaction is L-cysteate + H(+) = taurine + CO2. The protein operates within organosulfur biosynthesis; taurine biosynthesis; hypotaurine from L-cysteine: step 2/2. Its activity is regulated as follows. Activated by Mn(2+). Inhibited by bis-carboxymethyl-trithiocarbonate, ethylxanthogenacetic acid and 2,5-disulfoaniline. Not affected by Li(+) within 0.05-40 mM concentration range. Functionally, catalyzes the decarboxylation of L-aspartate, 3-sulfino-L-alanine (cysteine sulfinic acid), and L-cysteate to beta-alanine, hypotaurine and taurine, respectively. The preferred substrate is 3-sulfino-L-alanine. Does not exhibit any decarboxylation activity toward glutamate. The polypeptide is Cysteine sulfinic acid decarboxylase (Mus musculus (Mouse)).